Consider the following 968-residue polypeptide: Translation initiation factor IF-2 (968 aa).

The span at 51–76 (PAAGASKSEAPAAAPKAPASPAATRP) shows a compositional bias: low complexity. Positions 51-369 (PAAGASKSEA…GVSVPRGDGN (319 aa)) are disordered. The span at 77–87 (APAPGPAAPKA) shows a compositional bias: pro residues. Positions 93-102 (EAPAAASAPS) are enriched in low complexity. Residues 103–112 (APAPAAPAPA) are compositionally biased toward pro residues. Composition is skewed to low complexity over residues 113-122 (APAAAASAPS), 128-170 (APST…GNNP), and 239-254 (GARP…PGAR). Residues 281 to 336 (GRPGGGGRGPGRPGGAPGTGGAPGAGGGAPAGGGFGKGGRGRGGTQGAFGKGGAGR) show a composition bias toward gly residues. Over residues 337-346 (GKQRKSKRAK) the composition is skewed to basic residues. The tr-type G domain occupies 461–632 (ARPPVVTVMG…AVLLTADAAL (172 aa)). The tract at residues 470–477 (GHVDHGKT) is G1. 470 to 477 (GHVDHGKT) contacts GTP. The tract at residues 495 to 499 (GITQH) is G2. The interval 520–523 (DTPG) is G3. GTP-binding positions include 520–524 (DTPGH) and 574–577 (NKID). Positions 574-577 (NKID) are G4. Residues 610–612 (SAR) are G5.

This sequence belongs to the TRAFAC class translation factor GTPase superfamily. Classic translation factor GTPase family. IF-2 subfamily.

The protein localises to the cytoplasm. In terms of biological role, one of the essential components for the initiation of protein synthesis. Protects formylmethionyl-tRNA from spontaneous hydrolysis and promotes its binding to the 30S ribosomal subunits. Also involved in the hydrolysis of GTP during the formation of the 70S ribosomal complex. This is Translation initiation factor IF-2 from Arthrobacter sp. (strain FB24).